The chain runs to 511 residues: Arginine-containing cyclodipeptide synthase eshA (511 aa).

A Conserved DDXXE motif motif is present at residues aspartate 413 to glutamate 417.

This sequence belongs to the arginine-containing cyclodipeptide synthase family.

The catalysed reaction is L-arginyl-tRNA(Arg) + L-leucyl-tRNA(Leu) = cyclo(L-arginyl-L-leucyl) + tRNA(Arg) + tRNA(Leu) + 2 H(+). It participates in secondary metabolite biosynthesis. In terms of biological role, arginine-containing cyclodipeptide synthase; part of the cluster that mediates the biosynthesis of a highly modified cyclo-arginine-leucine dipeptide (cRW). Within the pathway, eshA acts as the scaffold-generating enzyme and is responsible for formation of the cyclo-Arg-Leu diketopiperazine (cRL) from L-arginyl-tRNA(Arg) + L-Leucyl-tRNA(Leu). Additional enzymes from the cluster then further modify the cyclo-Arg-Leu diketopiperazine (cRW) scaffold. This chain is Arginine-containing cyclodipeptide synthase eshA, found in Penicillium shearii (Eupenicillium shearii).